A 217-amino-acid chain; its full sequence is Holliday junction branch migration complex subunit RuvA (217 aa).

The tract at residues 1–64 is domain I; that stretch reads MIGKLTGILD…EDAIRLFGFE (64 aa). The domain II stretch occupies residues 65–145; it reads TKVEQDWFCL…NAPHQSMPHF (81 aa). Residues 146-160 form a flexible linker region; sequence VSYSSETSSQAGTQH. Residues 161-217 form a domain III region; that stretch reads TGHQHSMDALAALTKLGFERDQATHALQEAIKAFEGETPSSALLIRHSLKLLSSHLK.

It belongs to the RuvA family. In terms of assembly, homotetramer. Forms an RuvA(8)-RuvB(12)-Holliday junction (HJ) complex. HJ DNA is sandwiched between 2 RuvA tetramers; dsDNA enters through RuvA and exits via RuvB. An RuvB hexamer assembles on each DNA strand where it exits the tetramer. Each RuvB hexamer is contacted by two RuvA subunits (via domain III) on 2 adjacent RuvB subunits; this complex drives branch migration. In the full resolvosome a probable DNA-RuvA(4)-RuvB(12)-RuvC(2) complex forms which resolves the HJ.

Its subcellular location is the cytoplasm. In terms of biological role, the RuvA-RuvB-RuvC complex processes Holliday junction (HJ) DNA during genetic recombination and DNA repair, while the RuvA-RuvB complex plays an important role in the rescue of blocked DNA replication forks via replication fork reversal (RFR). RuvA specifically binds to HJ cruciform DNA, conferring on it an open structure. The RuvB hexamer acts as an ATP-dependent pump, pulling dsDNA into and through the RuvAB complex. HJ branch migration allows RuvC to scan DNA until it finds its consensus sequence, where it cleaves and resolves the cruciform DNA. In Bartonella bacilliformis (strain ATCC 35685 / KC583 / Herrer 020/F12,63), this protein is Holliday junction branch migration complex subunit RuvA.